Reading from the N-terminus, the 1992-residue chain is E3 ubiquitin-protein ligase TRIP12 (1992 aa).

Positions 1 to 10 (MSNRPNNNPG) are enriched in polar residues. Disordered regions lie at residues 1 to 398 (MSNR…DDSE), 797 to 817 (QRKP…SKKD), and 938 to 1080 (SLLT…ASKD). S2 carries the N-acetylserine modification. A Phosphoserine modification is found at S12. Residues 18–27 (RNTAGAQPQD) are compositionally biased toward polar residues. Over residues 48–70 (DPDRANTSERQKTGQVPKKDNSR) the composition is skewed to basic and acidic residues. Phosphoserine occurs at positions 77, 85, and 100. Residues 78-88 (PDYNRTNSPSS) show a composition bias toward polar residues. Residues 119 to 132 (EQQLKSAQSPSTSK) show a composition bias toward polar residues. 2 stretches are compositionally biased toward low complexity: residues 154–166 (SSCV…SEST) and 175–216 (PTKL…SSTV). N6-acetyllysine is present on K181. Over residues 280–290 (PGSSKSETSKP) the composition is skewed to polar residues. S310 and S312 each carry phosphoserine. Polar residues predominate over residues 326–338 (QKTTGSCASTSRR). Basic and acidic residues predominate over residues 346-358 (GAAEARRQEKMAD). Polar residues-rich tracts occupy residues 360–371 (ESNQEAVNSSAA) and 803–812 (LANSNTSGYS). A WWE domain is found at 749–836 (MLKKGNAQNT…DPELAKSFIK (88 aa)). The residue at position 942 (S942) is a Phosphoserine. The segment covering 948 to 973 (TNGSGSMGSTTSVSSGTATAATHAAA) has biased composition (low complexity). Phosphoserine is present on residues S991 and S997. Basic residues predominate over residues 1001–1014 (KRKRLPKRGPRRPK). Position 1016 is a phosphoserine (S1016). Residues 1017–1026 (PPRDDDKVDN) are compositionally biased toward basic and acidic residues. The span at 1029-1040 (KSPTTTQSPKSS) shows a compositional bias: low complexity. The residue at position 1030 (S1030) is a Phosphoserine. The span at 1041–1062 (FLASLNPKTWGRLSTQSNSNNI) shows a compositional bias: polar residues. Phosphoserine is present on residues S1317, S1322, S1329, and S1376. T1377 bears the Phosphothreonine mark. Disordered stretches follow at residues 1407–1433 (SNKD…NAKK) and 1568–1587 (TNPE…PRLD). At K1425 the chain carries N6-acetyllysine. The residue at position 1427 (S1427) is a Phosphoserine. The interval 1496-1570 (EIIPTSEFIN…AMQRLLDTNP (75 aa)) is K-box. The HECT domain occupies 1885 to 1992 (PDHGYTHDSR…REGQQSFHLS (108 aa)). The active-site Glycyl thioester intermediate is C1959.

This sequence belongs to the UPL family. K-HECT subfamily. As to quaternary structure, interacts with MYC; leading to disrupt interaction with isoform p19ARF/ARF of CDKN2A. Interacts with TRADD; leading to disrupt interaction with isoform p19ARF/ARF of CDKN2A. Interacts with SMARCC1; leading to disrupt interaction with SMARCE1.

It is found in the nucleus. It localises to the nucleoplasm. The enzyme catalyses S-ubiquitinyl-[E2 ubiquitin-conjugating enzyme]-L-cysteine + [acceptor protein]-L-lysine = [E2 ubiquitin-conjugating enzyme]-L-cysteine + N(6)-ubiquitinyl-[acceptor protein]-L-lysine.. Its pathway is protein modification; protein ubiquitination. Its function is as follows. E3 ubiquitin-protein ligase involved in ubiquitin fusion degradation (UFD) pathway and regulation of DNA repair. Part of the ubiquitin fusion degradation (UFD) pathway, a process that mediates ubiquitination of protein at their N-terminus, regardless of the presence of lysine residues in target proteins. Acts as a key regulator of DNA damage response by acting as a suppressor of RNF168, an E3 ubiquitin-protein ligase that promotes accumulation of 'Lys-63'-linked histone H2A and H2AX at DNA damage sites, thereby acting as a guard against excessive spreading of ubiquitinated chromatin at damaged chromosomes. In normal cells, mediates ubiquitination and degradation of isoform p19ARF/ARF of CDKN2A, a lysine-less tumor suppressor required for p53/TP53 activation under oncogenic stress. In cancer cells, however, isoform p19ARF/ARF and TRIP12 are located in different cell compartments, preventing isoform p19ARF/ARF ubiquitination and degradation. Does not mediate ubiquitination of isoform p16-INK4a of CDKN2A. Also catalyzes ubiquitination of NAE1 and SMARCE1, leading to their degradation. Ubiquitination and degradation of target proteins is regulated by interaction with proteins such as MYC, TRADD or SMARCC1, which disrupt the interaction between TRIP12 and target proteins. Mediates ubiquitination of ASXL1: following binding to N(6)-methyladenosine methylated DNA, ASXL1 is ubiquitinated by TRIP12, leading to its degradation and subsequent inactivation of the PR-DUB complex. This chain is E3 ubiquitin-protein ligase TRIP12 (TRIP12), found in Homo sapiens (Human).